Here is a 276-residue protein sequence, read N- to C-terminus: Pantothenate synthetase (276 aa).

27-34 (MGNLHDGH) contributes to the ATP binding site. His34 (proton donor) is an active-site residue. A (R)-pantoate-binding site is contributed by Gln58. Beta-alanine is bound at residue Gln58. 145 to 148 (GKKD) is an ATP binding site. Gln151 serves as a coordination point for (R)-pantoate. ATP contacts are provided by residues Ile174 and 182-185 (LSSR).

It belongs to the pantothenate synthetase family. As to quaternary structure, homodimer.

It is found in the cytoplasm. The enzyme catalyses (R)-pantoate + beta-alanine + ATP = (R)-pantothenate + AMP + diphosphate + H(+). Its pathway is cofactor biosynthesis; (R)-pantothenate biosynthesis; (R)-pantothenate from (R)-pantoate and beta-alanine: step 1/1. Its function is as follows. Catalyzes the condensation of pantoate with beta-alanine in an ATP-dependent reaction via a pantoyl-adenylate intermediate. In Aromatoleum aromaticum (strain DSM 19018 / LMG 30748 / EbN1) (Azoarcus sp. (strain EbN1)), this protein is Pantothenate synthetase.